A 261-amino-acid polypeptide reads, in one-letter code: Probable glutathione-independent glyoxalase hsp3103 (261 aa).

Active-site residues include Cys-162, His-163, and Glu-196.

Belongs to the peptidase C56 family. HSP31-like subfamily.

It catalyses the reaction methylglyoxal + H2O = (R)-lactate + H(+). In terms of biological role, catalyzes the conversion of methylglyoxal (MG) to D-lactate in a single glutathione (GSH)-independent step. May play a role in detoxifying endogenously produced glyoxals. Involved in protection against reactive oxygen species (ROS). The polypeptide is Probable glutathione-independent glyoxalase hsp3103 (Schizosaccharomyces pombe (strain 972 / ATCC 24843) (Fission yeast)).